The chain runs to 254 residues: Alcohol dehydrogenase 1 (254 aa).

10–33 (FVAGLGGIGLDTSREIVKSGPKNL) is an NAD(+) binding site. S138 contacts substrate. Y151 (proton acceptor) is an active-site residue.

It belongs to the short-chain dehydrogenases/reductases (SDR) family. Homodimer.

The catalysed reaction is a primary alcohol + NAD(+) = an aldehyde + NADH + H(+). The enzyme catalyses a secondary alcohol + NAD(+) = a ketone + NADH + H(+). The sequence is that of Alcohol dehydrogenase 1 (Adh1) from Drosophila montana (Fruit fly).